Here is a 43-residue protein sequence, read N- to C-terminus: Iota-conotoxin-like S11.2 (43 aa).

4 disulfide bridges follow: C2–C16, C9–C19, C15–C24, and C18–C35. A D-methionine modification is found at M41. Residue R43 is a propeptide, removed by a carboxypeptidase.

It belongs to the conotoxin I1 superfamily. Expressed by the venom duct.

The protein localises to the secreted. In terms of biological role, iota-conotoxins bind to voltage-gated sodium channels (Nav) and act as agonists by shifting the voltage-dependence of activation to more hyperpolarized levels. Produces general excitatory symptoms. This Conus striatus (Striated cone) protein is Iota-conotoxin-like S11.2.